The sequence spans 310 residues: ATP-dependent protease (310 aa).

Residues 24-186 (RLNQCFFKFK…TPNQKEENYF (163 aa)) form the Integrase catalytic domain.

The chain is ATP-dependent protease from Lactococcus lactis subsp. lactis (Streptococcus lactis).